The sequence spans 395 residues: Phosphoglycerate kinase (395 aa).

Substrate contacts are provided by residues 20–22 (DLN), Arg35, 58–61 (HFGR), Arg117, and Arg150. Residues Lys200, Glu322, and 352–355 (GGDT) each bind ATP.

Belongs to the phosphoglycerate kinase family. Monomer.

The protein localises to the cytoplasm. The enzyme catalyses (2R)-3-phosphoglycerate + ATP = (2R)-3-phospho-glyceroyl phosphate + ADP. The protein operates within carbohydrate degradation; glycolysis; pyruvate from D-glyceraldehyde 3-phosphate: step 2/5. This chain is Phosphoglycerate kinase, found in Brucella suis biovar 1 (strain 1330).